The chain runs to 213 residues: Pyridoxine/pyridoxamine 5'-phosphate oxidase (213 aa).

Substrate-binding positions include 8-11 and K67; that span reads RREY. Residues 62–67, 77–78, R83, K84, and Q106 each bind FMN; these read RIVLLK and FT. 3 residues coordinate substrate: Y124, R128, and S132. Residues 141–142 and W186 each bind FMN; that span reads QS. A substrate-binding site is contributed by 192–194; the sequence is RLH. Residue R196 coordinates FMN.

Belongs to the pyridoxamine 5'-phosphate oxidase family. In terms of assembly, homodimer. Requires FMN as cofactor.

It catalyses the reaction pyridoxamine 5'-phosphate + O2 + H2O = pyridoxal 5'-phosphate + H2O2 + NH4(+). The enzyme catalyses pyridoxine 5'-phosphate + O2 = pyridoxal 5'-phosphate + H2O2. It participates in cofactor metabolism; pyridoxal 5'-phosphate salvage; pyridoxal 5'-phosphate from pyridoxamine 5'-phosphate: step 1/1. Its pathway is cofactor metabolism; pyridoxal 5'-phosphate salvage; pyridoxal 5'-phosphate from pyridoxine 5'-phosphate: step 1/1. Functionally, catalyzes the oxidation of either pyridoxine 5'-phosphate (PNP) or pyridoxamine 5'-phosphate (PMP) into pyridoxal 5'-phosphate (PLP). The protein is Pyridoxine/pyridoxamine 5'-phosphate oxidase of Shewanella sediminis (strain HAW-EB3).